The following is a 448-amino-acid chain: Gametocyte surface protein P45/48 (448 aa).

An N-terminal signal peptide occupies residues 1–27 (MMLYISAKKAQVAFILYIVLVLRIISG). The 6-Cys 1 domain occupies 45–182 (IGYKCNFSNE…AMVHVRVLKY (138 aa)). Intrachain disulfides connect Cys-49–Cys-71 and Cys-102–Cys-156. Asn-50, Asn-131, Asn-190, Asn-204, Asn-254, Asn-299, and Asn-303 each carry an N-linked (GlcNAc...) asparagine glycan. Residues 294–426 (VIHGCNFSSN…KSAYMTVTID (133 aa)) form the 6-Cys 2 domain. 3 disulfides stabilise this stretch: Cys-298–Cys-327, Cys-344–Cys-412, and Cys-352–Cys-410. A lipid anchor (GPI-anchor amidated aspartate) is attached at Asp-426. Positions 427–448 (SAYYGFLAKTFIFLIVAILLYI) are cleaved as a propeptide — removed in mature form.

Heterodimer; heterodimerizes with PF230.

It is found in the cell surface. It localises to the cell membrane. In terms of biological role, gametocyte surface protein required for male fertility. This is Gametocyte surface protein P45/48 (PF45/48) from Plasmodium falciparum (isolate 3D7).